Here is a 169-residue protein sequence, read N- to C-terminus: MDVEAFYKISYGLYIVTSESNGRKCGQIANTVFQLTSKPVQIAVCLNKENDTHNAVKESGAFGVSVLELETPMEFIGRFGFRKSSEFEKFDGVEYKTGKTGVPLVTQHAVAVIEAKVVKECDVGTHTLFVGEAVDAEVLKDAEVLTYADYHLMKKGKTPRTATVYFESK.

Tyr-7 is an NADP(+) binding site. Residues 27 to 31 (QIANT), 45 to 52 (CLNKENDT), 82 to 84 (RKS), and Lys-89 contribute to the FMN site. NADP(+)-binding positions include His-126 and 147 to 154 (YADYHLMK).

It belongs to the non-flavoprotein flavin reductase family. In terms of assembly, homodimer. The cofactor is FMN. FAD serves as cofactor.

It catalyses the reaction 2 a Fe(II)-siderophore + NAD(+) + H(+) = 2 a Fe(III)-siderophore + NADH. The enzyme catalyses 2 a Fe(II)-siderophore + NADP(+) + H(+) = 2 a Fe(III)-siderophore + NADPH. In terms of biological role, catalyzes the reduction of bound ferric iron (Fe(3+)) in a variety of iron chelators (siderophores) using NAD(P)H as the electron donor, resulting in the release of Fe(2+). Not active with uncomplexed Fe(3+). Also reduces FMN and FAD, but not riboflavin. This is Ferric-chelate reductase (NAD(P)H) from Archaeoglobus fulgidus (strain ATCC 49558 / DSM 4304 / JCM 9628 / NBRC 100126 / VC-16).